The chain runs to 196 residues: Molybdopterin synthase catalytic subunit (196 aa).

Residues 1–29 (MSTLPSTDPPPLPASTSSQQPAVHIPPPS) are disordered. Substrate contacts are provided by residues 145–146 (HR), Lys161, and 168–170 (KRE). The interval 174–196 (GEPPGQGEWRANRDTDPEGKSTS) is disordered. Residues 183 to 196 (RANRDTDPEGKSTS) are compositionally biased toward basic and acidic residues.

The protein belongs to the MoaE family. MOCS2B subfamily. As to quaternary structure, heterotetramer; composed of 2 small (MOCS2A) and 2 large (MOCS2B) subunits.

The protein resides in the cytoplasm. It catalyses the reaction 2 [molybdopterin-synthase sulfur-carrier protein]-C-terminal-Gly-aminoethanethioate + cyclic pyranopterin phosphate + H2O = molybdopterin + 2 [molybdopterin-synthase sulfur-carrier protein]-C-terminal Gly-Gly + 2 H(+). It functions in the pathway cofactor biosynthesis; molybdopterin biosynthesis. Its function is as follows. Catalytic subunit of the molybdopterin synthase complex, a complex that catalyzes the conversion of precursor Z into molybdopterin. Acts by mediating the incorporation of 2 sulfur atoms from thiocarboxylated MOCS2A into precursor Z to generate a dithiolene group. The sequence is that of Molybdopterin synthase catalytic subunit from Coccidioides immitis (strain RS) (Valley fever fungus).